Reading from the N-terminus, the 217-residue chain is Ribosomal RNA small subunit methyltransferase G (217 aa).

S-adenosyl-L-methionine contacts are provided by residues G76, F81, 128 to 129 (LE), and R142.

This sequence belongs to the methyltransferase superfamily. RNA methyltransferase RsmG family.

It is found in the cytoplasm. The enzyme catalyses guanosine(527) in 16S rRNA + S-adenosyl-L-methionine = N(7)-methylguanosine(527) in 16S rRNA + S-adenosyl-L-homocysteine. In terms of biological role, specifically methylates the N7 position of guanine in position 527 of 16S rRNA. This is Ribosomal RNA small subunit methyltransferase G from Rhizorhabdus wittichii (strain DSM 6014 / CCUG 31198 / JCM 15750 / NBRC 105917 / EY 4224 / RW1) (Sphingomonas wittichii).